Here is a 178-residue protein sequence, read N- to C-terminus: Large ribosomal subunit protein uL6 (178 aa).

Belongs to the universal ribosomal protein uL6 family. Part of the 50S ribosomal subunit.

In terms of biological role, this protein binds to the 23S rRNA, and is important in its secondary structure. It is located near the subunit interface in the base of the L7/L12 stalk, and near the tRNA binding site of the peptidyltransferase center. This chain is Large ribosomal subunit protein uL6, found in Staphylococcus aureus (strain Mu3 / ATCC 700698).